The chain runs to 530 residues: NADH-quinone oxidoreductase subunit C/D (530 aa).

The interval Met1–Thr144 is NADH dehydrogenase I subunit C. Positions Glu171–Arg530 are NADH dehydrogenase I subunit D.

The protein in the N-terminal section; belongs to the complex I 30 kDa subunit family. It in the C-terminal section; belongs to the complex I 49 kDa subunit family. NDH-1 is composed of 13 different subunits. Subunits NuoB, CD, E, F, and G constitute the peripheral sector of the complex.

The protein resides in the cell inner membrane. It catalyses the reaction a quinone + NADH + 5 H(+)(in) = a quinol + NAD(+) + 4 H(+)(out). Functionally, NDH-1 shuttles electrons from NADH, via FMN and iron-sulfur (Fe-S) centers, to quinones in the respiratory chain. The immediate electron acceptor for the enzyme in this species is believed to be a menaquinone. Couples the redox reaction to proton translocation (for every two electrons transferred, four hydrogen ions are translocated across the cytoplasmic membrane), and thus conserves the redox energy in a proton gradient. This is NADH-quinone oxidoreductase subunit C/D from Bacteroides fragilis (strain ATCC 25285 / DSM 2151 / CCUG 4856 / JCM 11019 / LMG 10263 / NCTC 9343 / Onslow / VPI 2553 / EN-2).